The sequence spans 248 residues: Uridylate kinase (248 aa).

Position 11–14 (11–14 (KISG)) interacts with ATP. A UMP-binding site is contributed by glycine 53. 2 residues coordinate ATP: glycine 54 and arginine 58. UMP-binding positions include aspartate 74 and 135-142 (AGSPYLTT). Positions 162, 169, and 172 each coordinate ATP.

The protein belongs to the UMP kinase family. As to quaternary structure, homohexamer.

Its subcellular location is the cytoplasm. It carries out the reaction UMP + ATP = UDP + ADP. Its pathway is pyrimidine metabolism; CTP biosynthesis via de novo pathway; UDP from UMP (UMPK route): step 1/1. Its activity is regulated as follows. Inhibited by UTP. Functionally, catalyzes the reversible phosphorylation of UMP to UDP. This Chlamydia pneumoniae (Chlamydophila pneumoniae) protein is Uridylate kinase.